The sequence spans 474 residues: Citrate synthase 4, mitochondrial (474 aa).

The transit peptide at 1–16 (MVFFRSVSAFTRLRSR) directs the protein to the mitochondrion. Catalysis depends on residues histidine 308, histidine 354, and aspartate 409.

The protein belongs to the citrate synthase family. As to quaternary structure, homodimer.

It localises to the mitochondrion matrix. It carries out the reaction oxaloacetate + acetyl-CoA + H2O = citrate + CoA + H(+). Its pathway is carbohydrate metabolism; tricarboxylic acid cycle; isocitrate from oxaloacetate: step 1/2. This is Citrate synthase 4, mitochondrial (CSY4) from Arabidopsis thaliana (Mouse-ear cress).